Reading from the N-terminus, the 61-residue chain is Metallothionein-1E (61 aa).

M1 is modified (N-acetylmethionine). The segment at 1-29 (MDPNCSCPTGGSCSCAGSCTCKACRCTSC) is beta. A divalent metal cation-binding residues include C5, C7, C13, C15, C19, C21, C24, C26, C29, C33, C34, C36, C37, C41, C44, C48, C50, C57, C59, and C60. An alpha region spans residues 30-61 (KKSCCSCCPVGCAKCAQGCICKGASDKCSCCA).

The protein belongs to the metallothionein superfamily. Type 1 family. As to quaternary structure, monomer.

In terms of biological role, metallothioneins have a high content of cysteine residues that bind various heavy metals; these proteins are transcriptionally regulated by both heavy metals and glucocorticoids. The sequence is that of Metallothionein-1E (MT1E) from Sus scrofa (Pig).